The primary structure comprises 162 residues: Blue copper protein 1b (162 aa).

The N-terminal stretch at 1-23 is a signal peptide; that stretch reads MASSRVVLILSISMVLLSSVAIA. The 101-residue stretch at 25 to 125 folds into the Phytocyanin domain; that stretch reads TDYIVGDDKG…QMKLVITVLA (101 aa). Residue histidine 65 coordinates Cu cation. The N-linked (GlcNAc...) asparagine glycan is linked to asparagine 71. Residues cysteine 78 and cysteine 112 are joined by a disulfide bond. Residues cysteine 106, histidine 111, and methionine 117 each coordinate Cu cation. A helical transmembrane segment spans residues 142–162; that stretch reads VVSSLFGVVMAIMVAIAVIFA.

It localises to the membrane. The polypeptide is Blue copper protein 1b (Medicago truncatula (Barrel medic)).